Reading from the N-terminus, the 196-residue chain is Imidazoleglycerol-phosphate dehydratase (196 aa).

The protein belongs to the imidazoleglycerol-phosphate dehydratase family.

Its subcellular location is the cytoplasm. It catalyses the reaction D-erythro-1-(imidazol-4-yl)glycerol 3-phosphate = 3-(imidazol-4-yl)-2-oxopropyl phosphate + H2O. The protein operates within amino-acid biosynthesis; L-histidine biosynthesis; L-histidine from 5-phospho-alpha-D-ribose 1-diphosphate: step 6/9. The polypeptide is Imidazoleglycerol-phosphate dehydratase (Clostridium botulinum (strain Kyoto / Type A2)).